Consider the following 102-residue polypeptide: MTGIPMEHGLLLAAALFCIGLCGLLIRRNLLYILMSIEIMMNASALAFVVAGSRWAQADGQIMYILVISLAAAEASIGLALLLLLYRRYHTLNVDTVSEMRG.

A run of 3 helical transmembrane segments spans residues 6-26 (MEHG…GLLI), 30-50 (LLYI…AFVV), and 65-85 (ILVI…LLLL).

It belongs to the complex I subunit 4L family. In terms of assembly, NDH-1 is composed of 13 different subunits. Subunits NuoA, H, J, K, L, M, N constitute the membrane sector of the complex.

It is found in the cell inner membrane. The catalysed reaction is a quinone + NADH + 5 H(+)(in) = a quinol + NAD(+) + 4 H(+)(out). Functionally, NDH-1 shuttles electrons from NADH, via FMN and iron-sulfur (Fe-S) centers, to quinones in the respiratory chain. The immediate electron acceptor for the enzyme in this species is believed to be ubiquinone. Couples the redox reaction to proton translocation (for every two electrons transferred, four hydrogen ions are translocated across the cytoplasmic membrane), and thus conserves the redox energy in a proton gradient. The sequence is that of NADH-quinone oxidoreductase subunit K from Shewanella oneidensis (strain ATCC 700550 / JCM 31522 / CIP 106686 / LMG 19005 / NCIMB 14063 / MR-1).